The following is a 301-amino-acid chain: D-alanine--D-alanine ligase (301 aa).

One can recognise an ATP-grasp domain in the interval 99–293; sequence KRILAFGNVR…FEELLDTIIE (195 aa). 126–181 provides a ligand contact to ATP; that stretch reads IENLGYPVFIKPNNGGSSVATTLVESKEAVKDAVLEALKYDTEVMIEEYIKGDEIT. Mg(2+) contacts are provided by Asp248, Glu260, and Asn262.

Belongs to the D-alanine--D-alanine ligase family. Mg(2+) is required as a cofactor. Requires Mn(2+) as cofactor.

It localises to the cytoplasm. It carries out the reaction 2 D-alanine + ATP = D-alanyl-D-alanine + ADP + phosphate + H(+). It participates in cell wall biogenesis; peptidoglycan biosynthesis. Cell wall formation. This chain is D-alanine--D-alanine ligase, found in Clostridium perfringens (strain SM101 / Type A).